The chain runs to 110 residues: Nucleoid-associated protein CbuK_1603 (110 aa).

Belongs to the YbaB/EbfC family. In terms of assembly, homodimer.

The protein localises to the cytoplasm. Its subcellular location is the nucleoid. Functionally, binds to DNA and alters its conformation. May be involved in regulation of gene expression, nucleoid organization and DNA protection. This Coxiella burnetii (strain CbuK_Q154) (Coxiella burnetii (strain Q154)) protein is Nucleoid-associated protein CbuK_1603.